We begin with the raw amino-acid sequence, 442 residues long: Tol-Pal system protein TolB (442 aa).

A signal peptide spans 1 to 26 (MRHRSCFSLFAGLALVFCLAVGTAAA).

It belongs to the TolB family. In terms of assembly, the Tol-Pal system is composed of five core proteins: the inner membrane proteins TolA, TolQ and TolR, the periplasmic protein TolB and the outer membrane protein Pal. They form a network linking the inner and outer membranes and the peptidoglycan layer.

It is found in the periplasm. Part of the Tol-Pal system, which plays a role in outer membrane invagination during cell division and is important for maintaining outer membrane integrity. The sequence is that of Tol-Pal system protein TolB from Nitratidesulfovibrio vulgaris (strain ATCC 29579 / DSM 644 / CCUG 34227 / NCIMB 8303 / VKM B-1760 / Hildenborough) (Desulfovibrio vulgaris).